A 538-amino-acid polypeptide reads, in one-letter code: BTB/POZ domain-containing protein 6 (538 aa).

The N-terminal stretch at 1–17 is a signal peptide; sequence MLLPLACLHGRVAQCLT. Disordered regions lie at residues 29 to 53 and 76 to 115; these read PRRG…PPAK and AAVG…SPGW. A compositionally biased stretch (low complexity) spans 35 to 53; that stretch reads ARGAASTGAEAAPAAPPAK. Positions 85–103 are enriched in pro residues; sequence RSPPSAPAPAPPPPAPAPP. The 71-residue stretch at 136–206 folds into the BTB domain; that stretch reads ADVHFVVGPP…MYSDEIDLEA (71 aa).

In terms of tissue distribution, expressed in lens.

Its subcellular location is the cytoplasm. Functionally, adapter protein for the cul3 E3 ubiquitin-protein ligase complex. Involved in late neuronal development and muscle formation. The chain is BTB/POZ domain-containing protein 6 from Homo sapiens (Human).